The sequence spans 440 residues: Gamma-aminobutyric acid receptor subunit pi (440 aa).

A signal peptide spans 1–23 (MKRSLHLTFVCLSLFSARMCVQG). Residues 24–241 (NQFNIEVSRS…LVLQFELQRN (218 aa)) are Extracellular-facing. Residues asparagine 43, asparagine 102, and asparagine 145 are each glycosylated (N-linked (GlcNAc...) asparagine). Cysteine 160 and cysteine 174 are disulfide-bonded. 2 N-linked (GlcNAc...) asparagine glycosylation sites follow: asparagine 196 and asparagine 228. A helical membrane pass occupies residues 242–262 (VLYFILETYVPSTFLVVLSWV). Topologically, residues 263-270 (SFWISLDS) are cytoplasmic. The chain crosses the membrane as a helical span at residues 271–290 (VPARTCIGVTTVLSMTTLMI). Residues 291-301 (GSRTSLPNTNC) lie on the Extracellular side of the membrane. A helical membrane pass occupies residues 302–322 (FIKAIDVYLGICFSFVFGALL). Topologically, residues 323–419 (EYAVAHYSSL…NPSNVDRYSK (97 aa)) are cytoplasmic. A helical membrane pass occupies residues 420–440 (LLFPLIFMLANVFYWAYYMYF).

Belongs to the ligand-gated ion channel (TC 1.A.9) family. Gamma-aminobutyric acid receptor (TC 1.A.9.5) subfamily. GABRP sub-subfamily. Heteropentamer, formed by a combination of alpha (GABRA1-6), beta (GABRB1-3), gamma (GABRG1-3), delta (GABRD), epsilon (GABRE), rho (GABRR1-3), pi (GABRP) and theta (GABRQ) chains, each subunit exhibiting distinct physiological and pharmacological properties.

It localises to the cell membrane. Its subcellular location is the apical cell membrane. It carries out the reaction chloride(in) = chloride(out). In terms of biological role, pi subunit of the heteropentameric ligand-gated chloride channel gated by gamma-aminobutyric acid (GABA). GABA-gated chloride channels, also named GABA(A) receptors (GABAAR), consist of five subunits arranged around a central pore and contain GABA active binding site(s) located at the alpha and beta subunit interfaces. When activated by GABA, GABAARs selectively allow the flow of chloride anions across the cell membrane down their electrochemical gradient. Pi-containing GABAARs are mostly located in peripheral tissues. In the uterus, pi subunits modulate uterus contraction by altering the sensitivity of GABAARs to pregnanolone. In the lungs, pi-containing GABAARs contribute to pulmonary fluid transport via luminal secretion of chloride. This is Gamma-aminobutyric acid receptor subunit pi (GABRP) from Bos taurus (Bovine).